Reading from the N-terminus, the 61-residue chain is Defensin BmKDfsin2 (61 aa).

The N-terminal stretch at 1–24 (METIVLLFLLALVFCTLEMGMVEA) is a signal peptide. 3 cysteine pairs are disulfide-bonded: cysteine 28–cysteine 49, cysteine 35–cysteine 57, and cysteine 39–cysteine 59.

Belongs to the invertebrate defensin family. Type 2 subfamily. Highly expressed in non-venom gland (hemolymph) and moderately expressed in venom gland.

It localises to the secreted. Functionally, antibacterial peptide active against Gram-positive bacteria, but not on Gram-negative bacteria. Also has weak blocking activity on Kv1.1/KCNA1, Kv1.2/KCNA2, Kv1.3/KCNA3, KCa3.1/KCNN4/IK, KCa2.3/KCNN3/SK3 and Kv11.1/KCNH2/ERG1 channels (tested at 1 uM). It inhibits potassium channel current by interacting with the pore region. The sequence is that of Defensin BmKDfsin2 from Olivierus martensii (Manchurian scorpion).